A 218-amino-acid chain; its full sequence is Putative glutamine transport system permease protein GlnP (218 aa).

Positions 19–208 (TLVTLKYSVI…ILVMLISFIA (190 aa)) constitute an ABC transmembrane type-1 domain. A run of 4 helical transmembrane segments spans residues 25–45 (YSVIAVIFGLVIGMLLAICKV), 57–79 (FYTSIFRGTPLLIQLSIIYFASP), 86–108 (FSVFMAGAISFSLNSGAYVSEVI), and 187–207 (FFPMFIAACCYYILVMLISFI).

This sequence belongs to the binding-protein-dependent transport system permease family. HisMQ subfamily.

It is found in the cell inner membrane. Its function is as follows. Part of the binding-protein-dependent transport system for glutamine; probably responsible for the translocation of the substrate across the membrane. The protein is Putative glutamine transport system permease protein GlnP (glnP) of Rickettsia felis (strain ATCC VR-1525 / URRWXCal2) (Rickettsia azadi).